Consider the following 324-residue polypeptide: Beta-ketoacyl-[acyl-carrier-protein] synthase III (324 aa).

Catalysis depends on residues C112 and H251. Residues 252-256 (QANLR) are ACP-binding. N281 is a catalytic residue.

It belongs to the thiolase-like superfamily. FabH family. Homodimer.

The protein resides in the cytoplasm. The enzyme catalyses malonyl-[ACP] + acetyl-CoA + H(+) = 3-oxobutanoyl-[ACP] + CO2 + CoA. It participates in lipid metabolism; fatty acid biosynthesis. Functionally, catalyzes the condensation reaction of fatty acid synthesis by the addition to an acyl acceptor of two carbons from malonyl-ACP. Catalyzes the first condensation reaction which initiates fatty acid synthesis and may therefore play a role in governing the total rate of fatty acid production. Possesses both acetoacetyl-ACP synthase and acetyl transacylase activities. Its substrate specificity determines the biosynthesis of branched-chain and/or straight-chain of fatty acids. This Clostridium perfringens (strain ATCC 13124 / DSM 756 / JCM 1290 / NCIMB 6125 / NCTC 8237 / Type A) protein is Beta-ketoacyl-[acyl-carrier-protein] synthase III.